The sequence spans 290 residues: MRIADKTVTRAILERHGFTFKKSFGQNFLTDTNILQKIVDTAEIDKGVNVIEIGPGIGALTEFLAENAAEVMAFEIDDRLIPILADTLARFDNVQVVNQDILKADLQTQIQAFKNPDLPIKVVANLPYYITTPILMHLIESKIPFAEFVVMIQKEVADRISAMPNTKAYGSLSIAVQYYMTAKVSFIVPRTVFVPAPNVDSAILKMVRRDQPVVSVQDEDFFFRVSKVAFVHRRKTLWNNLTSHFGKSEDTKAKLEKALEIAKIKPSIRGEALSIPDFASLADALKEVGI.

The S-adenosyl-L-methionine site is built by Asn27, Leu29, Gly54, Glu75, Asp100, and Asn125.

The protein belongs to the class I-like SAM-binding methyltransferase superfamily. rRNA adenine N(6)-methyltransferase family. RsmA subfamily.

It is found in the cytoplasm. The enzyme catalyses adenosine(1518)/adenosine(1519) in 16S rRNA + 4 S-adenosyl-L-methionine = N(6)-dimethyladenosine(1518)/N(6)-dimethyladenosine(1519) in 16S rRNA + 4 S-adenosyl-L-homocysteine + 4 H(+). Its function is as follows. Specifically dimethylates two adjacent adenosines (A1518 and A1519) in the loop of a conserved hairpin near the 3'-end of 16S rRNA in the 30S particle. May play a critical role in biogenesis of 30S subunits. The chain is Ribosomal RNA small subunit methyltransferase A from Streptococcus agalactiae serotype V (strain ATCC BAA-611 / 2603 V/R).